The chain runs to 218 residues: Thiopurine S-methyltransferase (218 aa).

S-adenosyl-L-methionine is bound by residues tryptophan 10, leucine 45, glutamate 66, and arginine 123.

It belongs to the class I-like SAM-binding methyltransferase superfamily. TPMT family.

The protein resides in the cytoplasm. It catalyses the reaction S-adenosyl-L-methionine + a thiopurine = S-adenosyl-L-homocysteine + a thiopurine S-methylether.. The chain is Thiopurine S-methyltransferase from Shewanella baltica (strain OS195).